The chain runs to 121 residues: Fluoride-specific ion channel FluC (121 aa).

4 helical membrane passes run 5–25 (LLIFLGGGTGSVLRYLLTISI), 33–53 (FPWGTFAVNILGCILIGVFYT), 66–83 (LMLTIGLCGGFTTFSTFS), and 98–118 (FFTYIIGSVVLGILGVMLGIW). 2 residues coordinate Na(+): glycine 74 and threonine 77.

Belongs to the fluoride channel Fluc/FEX (TC 1.A.43) family.

It is found in the cell inner membrane. It carries out the reaction fluoride(in) = fluoride(out). With respect to regulation, na(+) is not transported, but it plays an essential structural role and its presence is essential for fluoride channel function. Functionally, fluoride-specific ion channel. Important for reducing fluoride concentration in the cell, thus reducing its toxicity. This Phocaeicola vulgatus (strain ATCC 8482 / DSM 1447 / JCM 5826 / CCUG 4940 / NBRC 14291 / NCTC 11154) (Bacteroides vulgatus) protein is Fluoride-specific ion channel FluC.